The following is a 305-amino-acid chain: Probable 5-dehydro-4-deoxyglucarate dehydratase (305 aa).

Belongs to the DapA family.

The catalysed reaction is 5-dehydro-4-deoxy-D-glucarate + H(+) = 2,5-dioxopentanoate + CO2 + H2O. The protein operates within carbohydrate acid metabolism; D-glucarate degradation; 2,5-dioxopentanoate from D-glucarate: step 2/2. The polypeptide is Probable 5-dehydro-4-deoxyglucarate dehydratase (Pseudomonas entomophila (strain L48)).